Here is a 647-residue protein sequence, read N- to C-terminus: Golgi-associated RAB2B interactor protein 3 (647 aa).

Residues 188-202 show a composition bias toward polar residues; it reads IPTADTSTETKSTLV. Disordered stretches follow at residues 188-220, 267-296, 361-384, and 465-573; these read IPTA…TSQD, TAGA…GSAR, SKSP…QERS, and RDGS…GFVS. Basic and acidic residues predominate over residues 205-214; that stretch reads IHGEGDRDSK. Residues 361–378 are compositionally biased toward polar residues; that stretch reads SKSPGSGQVATGLTGTAS. The residue at position 378 (serine 378) is a Phosphoserine. Residues 478 to 491 are compositionally biased toward basic and acidic residues; it reads TQKEKRERRESDRK. The segment covering 492–501 has biased composition (basic residues); sequence GSRKSSHHQR. Positions 494–511 match the Bipartite nuclear localization signal motif; it reads RKSSHHQRTGASRHSSSK. Residues 528-556 show a composition bias toward basic and acidic residues; sequence KTREDKKEKGRGSLRDQRHSSSYRSESRT. 2 positions are modified to phosphoserine: serine 634 and serine 636.

Belongs to the GARIN family. Interacts (via N-terminus) with RAB2B (in GTP-bound form). Interacts with FRG1.

The protein localises to the golgi apparatus. It is found in the nucleus. Its subcellular location is the cajal body. Its function is as follows. May be involved in RNA biogenesis. This Rattus norvegicus (Rat) protein is Golgi-associated RAB2B interactor protein 3 (Garin3).